The sequence spans 280 residues: Large ribosomal subunit protein uL2 (280 aa).

Disordered regions lie at residues serine 27–histidine 58 and methionine 226–arginine 280. 2 stretches are compositionally biased toward basic residues: residues leucine 37–histidine 58 and isoleucine 268–arginine 280.

It belongs to the universal ribosomal protein uL2 family. In terms of assembly, part of the 50S ribosomal subunit. Forms a bridge to the 30S subunit in the 70S ribosome.

Functionally, one of the primary rRNA binding proteins. Required for association of the 30S and 50S subunits to form the 70S ribosome, for tRNA binding and peptide bond formation. It has been suggested to have peptidyltransferase activity; this is somewhat controversial. Makes several contacts with the 16S rRNA in the 70S ribosome. In Mycobacterium ulcerans (strain Agy99), this protein is Large ribosomal subunit protein uL2.